We begin with the raw amino-acid sequence, 245 residues long: Ureidoacrylate amidohydrolase RutB (245 aa).

Asp-41 functions as the Proton acceptor in the catalytic mechanism. Lys-150 is an active-site residue. The active-site Nucleophile is the Cys-183.

This sequence belongs to the isochorismatase family. RutB subfamily.

The enzyme catalyses (Z)-3-ureidoacrylate + H2O + H(+) = (Z)-3-aminoacrylate + NH4(+) + CO2. It catalyses the reaction (Z)-3-ureidoacrylate + H2O = (Z)-3-aminoacrylate + carbamate + H(+). The catalysed reaction is (Z)-2-methylureidoacrylate + H2O + H(+) = (Z)-2-methylaminoacrylate + NH4(+) + CO2. Hydrolyzes ureidoacrylate to form aminoacrylate and carbamate. The carbamate hydrolyzes spontaneously, thereby releasing one of the nitrogen atoms of the pyrimidine ring as ammonia and one of its carbon atoms as CO2. The chain is Ureidoacrylate amidohydrolase RutB from Pseudomonas syringae pv. syringae (strain B728a).